The sequence spans 172 residues: Adrenodoxin-like protein 1, mitochondrial (172 aa).

The 2Fe-2S ferredoxin-type domain occupies 57-159; that stretch reads VNITYVDKDG…GMELELPKAT (103 aa). The [2Fe-2S] cluster site is built by cysteine 94, cysteine 100, cysteine 103, and cysteine 140.

The protein belongs to the adrenodoxin/putidaredoxin family. [2Fe-2S] cluster serves as cofactor.

Its subcellular location is the mitochondrion matrix. Required for ecdysteroidogenesis in the prothoracic gland which is necessary for larval to pupal transition. In Drosophila melanogaster (Fruit fly), this protein is Adrenodoxin-like protein 1, mitochondrial.